We begin with the raw amino-acid sequence, 370 residues long: Mitogen-activated protein kinase mpkC (370 aa).

Residues 19–298 (YANVRPVGLG…AAESLEHPYL (280 aa)) enclose the Protein kinase domain. ATP is bound by residues 25–33 (VGLGAFGLV) and Lys-48. Residue Asp-140 is the Proton acceptor of the active site. Thr-170 bears the Phosphothreonine mark. The short motif at 170 to 172 (TGY) is the TXY element. The residue at position 172 (Tyr-172) is a Phosphotyrosine.

It belongs to the protein kinase superfamily. Ser/Thr protein kinase family. MAP kinase subfamily. HOG1 sub-subfamily. It depends on Mg(2+) as a cofactor. Post-translationally, dually phosphorylated on Thr-170 and Tyr-172, which activates the enzyme.

It catalyses the reaction L-seryl-[protein] + ATP = O-phospho-L-seryl-[protein] + ADP + H(+). The catalysed reaction is L-threonyl-[protein] + ATP = O-phospho-L-threonyl-[protein] + ADP + H(+). With respect to regulation, activated by tyrosine and threonine phosphorylation. Mitogen-activated protein kinase required for growth on media where sorbitol or mannitol is the sole carbon source. This chain is Mitogen-activated protein kinase mpkC (mpkC), found in Aspergillus terreus (strain NIH 2624 / FGSC A1156).